Here is a 408-residue protein sequence, read N- to C-terminus: RNA-splicing ligase RtcB1 (408 aa).

Positions 75, 78, 168, 185, and 281 each coordinate Mn(2+). GMP is bound at residue 167 to 171; sequence NHFIE. GMP-binding positions include 281–282, 313–316, serine 320, 337–340, and lysine 407; these read HN, PGSM, and HGAG. Histidine 337 acts as the GMP-histidine intermediate in catalysis.

This sequence belongs to the RtcB family. In terms of assembly, monomer. Mn(2+) is required as a cofactor.

It carries out the reaction a 3'-end 3'-phospho-ribonucleotide-RNA + a 5'-end dephospho-ribonucleoside-RNA + GTP = a ribonucleotidyl-ribonucleotide-RNA + GMP + diphosphate. The enzyme catalyses a 3'-end 2',3'-cyclophospho-ribonucleotide-RNA + a 5'-end dephospho-ribonucleoside-RNA + GTP + H2O = a ribonucleotidyl-ribonucleotide-RNA + GMP + diphosphate + H(+). In terms of biological role, GTP-dependent RNA ligase that is involved in RNA repair. Joins RNA with 2',3'-cyclic-phosphate or 3'-phosphate ends to RNA with 5'-hydroxy ends. GTP-dependent RNA ligase that is involved in tRNA repair. Repairs broken tRNA(Asp) and tRNA(Arg) that have been cleaved by colicin E5 or colicin D, respectively. Does not repair damaged 16S rRNA in 30S ribosomal subunits. The chain is RNA-splicing ligase RtcB1 from Escherichia coli (strain ATCC 25922 / DSM 1103 / LMG 8223 / NCIMB 12210 / NCTC 12241 / WDCM 00013 / Seattle 1946).